The following is a 339-amino-acid chain: tRNA pseudouridine synthase B (339 aa).

D40 acts as the Nucleophile in catalysis. In terms of domain architecture, RPE1 insert spans 262-307 (FRRLSKFAYREEFEENTERSTAAYTLVREDANTGLTYKLPLEVELS).

It belongs to the pseudouridine synthase TruB family. Type 1 subfamily.

The enzyme catalyses uridine(55) in tRNA = pseudouridine(55) in tRNA. Responsible for synthesis of pseudouridine from uracil-55 in the psi GC loop of transfer RNAs. This Rickettsia felis (strain ATCC VR-1525 / URRWXCal2) (Rickettsia azadi) protein is tRNA pseudouridine synthase B.